The primary structure comprises 77 residues: Metallothionein-like protein type 2 (77 aa).

This sequence belongs to the metallothionein superfamily. Type 15 family. In terms of tissue distribution, expressed in the left, stem and flower, at very low levels in roots and is not detectable in mesophyll protoplasts.

In terms of biological role, metallothioneins have a high content of cysteine residues that bind various heavy metals. This is Metallothionein-like protein type 2 (MTI) from Vicia faba (Broad bean).